The chain runs to 562 residues: Serine palmitoyltransferase 2 (562 aa).

Residues 61–81 traverse the membrane as a helical segment; it reads LITYLNYLILIILGHIHDFLG. N6-(pyridoxal phosphate)lysine is present on K365.

Belongs to the class-II pyridoxal-phosphate-dependent aminotransferase family. Pyridoxal 5'-phosphate is required as a cofactor.

It is found in the membrane. The catalysed reaction is L-serine + hexadecanoyl-CoA + H(+) = 3-oxosphinganine + CO2 + CoA. Its pathway is lipid metabolism; sphingolipid metabolism. The sequence is that of Serine palmitoyltransferase 2 (LCB2) from Kluyveromyces lactis (strain ATCC 8585 / CBS 2359 / DSM 70799 / NBRC 1267 / NRRL Y-1140 / WM37) (Yeast).